Consider the following 379-residue polypeptide: Putative beta-glucosidase 6 (379 aa).

The N-terminal stretch at methionine 1–cysteine 20 is a signal peptide. A beta-D-glucoside-binding positions include glutamine 43, histidine 141, and asparagine 186–glutamate 187. Catalysis depends on glutamate 187, which acts as the Proton donor. The cysteines at positions 206 and 213 are disulfide-linked. Asparagine 217 carries N-linked (GlcNAc...) asparagine glycosylation. Tyrosine 329 serves as a coordination point for a beta-D-glucoside. N-linked (GlcNAc...) asparagine glycosylation is present at asparagine 362.

This sequence belongs to the glycosyl hydrolase 1 family.

It carries out the reaction Hydrolysis of terminal, non-reducing beta-D-glucosyl residues with release of beta-D-glucose.. This is Putative beta-glucosidase 6 from Arabidopsis thaliana (Mouse-ear cress).